The chain runs to 778 residues: Serine/threonine-protein kinase BRSK1 (778 aa).

The segment covering 1-12 (MSSGSKEGGGGS) has biased composition (gly residues). Residues 1-29 (MSSGSKEGGGGSPAYHLPHPHPHPPQHAQ) are disordered. The Protein kinase domain maps to 34-285 (YRLEKTLGKG…LEQIQKHPWY (252 aa)). Residues 40–48 (LGKGQTGLV) and K63 contribute to the ATP site. D156 functions as the Proton acceptor in the catalytic mechanism. T189 is subject to Phosphothreonine; by LKB1. A Phosphoserine modification is found at S193. In terms of domain architecture, UBA spans 314–356 (ELDPDVLESMASLGCFRDRERLHRELRSEEENQEKMIYYLLLD). A compositionally biased stretch (basic and acidic residues) spans 362–383 (PSCEDQDLPPRNDVDPPRKRVD). Residues 362-548 (PSCEDQDLPP…SPGGGVGGAA (187 aa)) form a disordered region. Residues S399, S443, S447, and S450 each carry the phosphoserine modification. The span at 430–457 (SRSVSGASTGLSSSPLSSPRSPVFSFSP) shows a compositional bias: low complexity. Residues R466, R481, R484, and R498 each carry the omega-N-methylarginine modification. The segment covering 491–508 (QPPPPSARSTPLPGPPGS) has biased composition (pro residues). Position 508 is a phosphoserine (S508). A compositionally biased stretch (low complexity) spans 509 to 533 (PRSSGGTPLHSPLHTPRASPTGTPG). R525 is modified (omega-N-methylarginine). T529 and T535 each carry phosphothreonine. R550 carries the omega-N-methylarginine modification. T583 bears the Phosphothreonine mark. A phosphoserine mark is found at S586, S587, and S601. The interval 719 to 778 (QPSVQALADEKNGAQTRPAGTPPRSLQPPPGRPDPDLSSSPRRGPSKDKKLLATNGTPLP) is disordered.

This sequence belongs to the protein kinase superfamily. CAMK Ser/Thr protein kinase family. SNF1 subfamily. Mg(2+) is required as a cofactor. Phosphorylated at Thr-189 by STK11/LKB1 in complex with STE20-related adapter-alpha (STRADA) pseudo kinase and CAB39. Not phosphorylated at Thr-189 by CaMKK2. In contrast, it is phosphorylated and activated by CaMKK1. May be inactivated via dephosphorylation of Thr-189 by PP2C. May be autophosphorylated. In terms of tissue distribution, mainly present in brain. Present in presynaptic nerve terminals (at protein level).

The protein localises to the cytoplasm. It is found in the nucleus. The protein resides in the cytoskeleton. Its subcellular location is the microtubule organizing center. It localises to the centrosome. The protein localises to the synapse. It is found in the presynaptic active zone. The protein resides in the cytoplasmic vesicle. Its subcellular location is the secretory vesicle. It localises to the synaptic vesicle. It carries out the reaction L-seryl-[protein] + ATP = O-phospho-L-seryl-[protein] + ADP + H(+). The catalysed reaction is L-threonyl-[protein] + ATP = O-phospho-L-threonyl-[protein] + ADP + H(+). It catalyses the reaction L-seryl-[tau protein] + ATP = O-phospho-L-seryl-[tau protein] + ADP + H(+). The enzyme catalyses L-threonyl-[tau protein] + ATP = O-phospho-L-threonyl-[tau protein] + ADP + H(+). Its activity is regulated as follows. Activated by phosphorylation on Thr-189 by STK11/LKB1. Serine/threonine-protein kinase that plays a key role in polarization of neurons and centrosome duplication. Phosphorylates CDC25B, CDC25C, MAPT/TAU, RIMS1, TUBG1, TUBG2 and WEE1. Following phosphorylation and activation by STK11/LKB1, acts as a key regulator of polarization of cortical neurons, probably by mediating phosphorylation of microtubule-associated proteins such as MAPT/TAU at 'Thr-523' and 'Ser-573'. Also regulates neuron polarization by mediating phosphorylation of WEE1 at 'Ser-642' in postmitotic neurons, leading to down-regulate WEE1 activity in polarized neurons. Also acts as a positive regulator of centrosome duplication by mediating phosphorylation of gamma-tubulin (TUBG1 and TUBG2) at 'Ser-131', leading to translocation of gamma-tubulin and its associated proteins to the centrosome. Involved in the UV-induced DNA damage checkpoint response, probably by inhibiting CDK1 activity through phosphorylation and activation of WEE1, and inhibition of CDC25B and CDC25C. In neurons, localizes to synaptic vesicles and plays a role in neurotransmitter release, possibly by phosphorylating RIMS1. In Rattus norvegicus (Rat), this protein is Serine/threonine-protein kinase BRSK1 (Brsk1).